The following is a 431-amino-acid chain: MVTEVSLIEIAKTTRQAAQKSAVLSTEAKNQAIEAVAQALEKATPKIITANQLDCRIAETDGIAKPLYNRLKMDEAKLNSAIEGLRNVATLRDPIGVVQIHRELDAGLILKRITCPLGVIGVVFEARPDAVIQISALAIKSGNGVILKGGKEATNSCLELVTAIRQGLSTTSVNPDGVQLLTTREETLELLKLDEYVDLIIPRGSNSFVKFVQENTQIPVLGHAEGICHVYVDKFADIQKAVKITIDAKTQYPAACNAAETLLVHTDVAAKFLSEVFPELEKRQVELRGDRATQQILSSVKEATDLDWATEYSDLVLSVKVVDSLDSAIAHINNYGSGHTDAIITEDGKAAEIFLAQIGSAGVFHNCSTRFSDGFRYGFGAEVGISTQKMPPRGPVGLEGLVTYKYQIVGDGHIAATYSGENAKPFTHQDF.

It belongs to the gamma-glutamyl phosphate reductase family.

The protein localises to the cytoplasm. The enzyme catalyses L-glutamate 5-semialdehyde + phosphate + NADP(+) = L-glutamyl 5-phosphate + NADPH + H(+). It functions in the pathway amino-acid biosynthesis; L-proline biosynthesis; L-glutamate 5-semialdehyde from L-glutamate: step 2/2. Catalyzes the NADPH-dependent reduction of L-glutamate 5-phosphate into L-glutamate 5-semialdehyde and phosphate. The product spontaneously undergoes cyclization to form 1-pyrroline-5-carboxylate. The protein is Gamma-glutamyl phosphate reductase of Trichodesmium erythraeum (strain IMS101).